Consider the following 338-residue polypeptide: Transferrin receptor subunit ESAG7 (338 aa).

The N-terminal stretch at 1-17 (MRFWFVLLALLGKEIYA) is a signal peptide. N26 and N110 each carry an N-linked (GlcNAc...) asparagine glycan. 4 disulfide bridges follow: C34–C161, C84–C311, C144–C215, and C230–C247. N234 carries N-linked (GlcNAc...) asparagine glycosylation.

As to quaternary structure, heterodimer composed of ESAG6 and ESAG7. N-glycosylated. Glycosylation is dispensable for heterodimer formation and host transferrin binding.

The protein resides in the cell membrane. It is found in the flagellar pocket. In terms of biological role, transferrin receptor subunit involved in receptor-mediated acquisition of iron from the environment by binding host TF/transferrin. The protein is Transferrin receptor subunit ESAG7 of Trypanosoma brucei brucei.